The chain runs to 304 residues: E3 ubiquitin-protein ligase CHIP (304 aa).

Residues 1-10 are compositionally biased toward basic and acidic residues; that stretch reads MKGKEEKEGG. The interval 1-30 is disordered; sequence MKGKEEKEGGARLGTGGGGSPDKSPSAQEL. Lys-2 participates in a covalent cross-link: Glycyl lysine isopeptide (Lys-Gly) (interchain with G-Cter in ubiquitin). A compositionally biased stretch (gly residues) spans 11–20; it reads ARLGTGGGGS. Phosphoserine is present on Ser-20. Residue Lys-23 forms a Glycyl lysine isopeptide (Lys-Gly) (interchain with G-Cter in ubiquitin) linkage. Phosphoserine is present on residues Ser-24 and Ser-26. TPR repeat units lie at residues 27 to 60, 61 to 94, and 96 to 128; these read AQEL…NPLV, AVYY…DGQS, and KAHF…AKEQ. Residues 102 to 201 form a required for interaction with MAPK7 region; the sequence is GQCQLEMESY…GHIRAQQACI (100 aa). A required for interaction with and ubiquitination of MYOCD region spans residues 143–197; it reads AKKKRWNSIEERRIHQESELHSYLTRLIAAERERELEECQRNHEGDEDDGHIRAQ. Residues 144 to 198 form a required for interaction with FOXO1 region; it reads KKKRWNSIEERRIHQESELHSYLTRLIAAERERELEECQRNHEGDEDDGHIRAQQ. Positions 144–304 are required for ubiquitination of FOXO1; the sequence is KKKRWNSIEE…ISENGWVEDY (161 aa). Ser-150 bears the Phosphoserine mark. Glycyl lysine isopeptide (Lys-Gly) (interchain with G-Cter in ubiquitin) cross-links involve residues Lys-222 and Lys-256. The region spanning 227 to 301 is the U-box domain; that stretch reads DIPDYLCGKI…DAFISENGWV (75 aa). Ser-274 bears the Phosphoserine mark.

Homodimer. Interacts with BAG2, and with the E2 ubiquitin conjugating enzymes UBE2D1, UBE2D2 and UBE2D3. Detected in a ternary complex containing STUB1, HSPA1A and HSPBP1. Part of a complex composed of STUB1/CHIP, VCP/p97, CHRNA3, and UBXN2A that modulates the ubiquitination and endoplasmic reticulum-associated degradation (ERAD) of CHRNA3. Within the complex UBXN2A acts as a scaffold protein required for the interaction of CHRNA3 with VCP/p97, this interaction also inhibits CHRNA3 ubiquitination by STUB1/CHIP and subsequently ERAD. Interacts with MKKS. Interacts with DNAAF4. Interacts (via the U-box domain) with the UBE2V2-UBE2N heterodimer; the complex has a specific 'Lys-63'-linked polyubiquitination activity. Interacts (when monoubiquitinated) with ATXN3. Interacts with UBE2W. Interacts with DNAJB6. Interacts with FLCN and HSP90AA1. Interacts with HSP90. Interacts with UBE2N and UBE2V1. Interacts (via TPR repeats) with HSPA8 (via C-terminus). Interacts (via TPR repeats) with HSPA1A (via C-terminus). Interacts with the non-acetylated form of HSPA1A and HSPA1B. Interacts with SMAD3 and HSP90AB1. Interacts with UBE4B. Interacts with PRMT5. Interacts with MYOCD (via C-terminus). Interacts with FOXO1 (when phosphorylated on 'Ser-250'). Interacts with MAPK7/ERK5; the interaction is enhanced in the presence of IGF1 or MAP2K5 and promotes STUB1/CHIP E3 ligase activity. Interacts with and ubiquitinates ESR1; the interaction is promoted in the absence of estradiol (17-beta-estradiol/E2). Interacts with ESR2. Interacts with and ubiquitinates NFATC3; HSPA1A/HSP70 is required as a co-chaperone. In macrophages, interacts with PAQR3; the interaction promotes PPARG poylubiquitination and STUB1-mediated degradation. Component of the chaperone-assisted selective autophagy (CASA) complex consisting of BAG3, HSPA8/HSC70, HSPB8 and STUB1/CHIP. In terms of processing, auto-ubiquitinated; mediated by UBE2D1 and UBE2D2 and enhanced in the presence of MAP2K5. Monoubiquitinated at Lys-2 following cell stress by UBE2W, promoting the interaction with ATXN3. In terms of tissue distribution, expressed in the adventitia layer of the carotid artery (at protein level). Expressed in the CA1 region of the hippocampus (at protein level). Expressed in the uterus (at protein level).

It is found in the cytoplasm. Its subcellular location is the nucleus. The protein resides in the mitochondrion. The catalysed reaction is S-ubiquitinyl-[E2 ubiquitin-conjugating enzyme]-L-cysteine + [acceptor protein]-L-lysine = [E2 ubiquitin-conjugating enzyme]-L-cysteine + N(6)-ubiquitinyl-[acceptor protein]-L-lysine.. Its pathway is protein modification; protein ubiquitination. Its function is as follows. E3 ubiquitin-protein ligase which targets misfolded chaperone substrates towards proteasomal degradation. Plays a role in the maintenance of mitochondrial morphology and promotes mitophagic removal of dysfunctional mitochondria; thereby acts as a protector against apoptosis in response to cellular stress. Negatively regulates vascular smooth muscle contraction, via degradation of the transcriptional activator MYOCD and subsequent loss of transcription of genes involved in vascular smooth muscle contraction. Promotes survival and proliferation of cardiac smooth muscle cells via ubiquitination and degradation of FOXO1, resulting in subsequent repression of FOXO1-mediated transcription of pro-apoptotic genes. Ubiquitinates ICER-type isoforms of CREM and targets them for proteasomal degradation, thereby acts as a positive effector of MAPK/ERK-mediated inhibition of apoptosis in cardiomyocytes. Inhibits lipopolysaccharide-induced apoptosis and hypertrophy in cardiomyocytes, via ubiquitination and subsequent proteasomal degradation of NFATC3. Collaborates with ATXN3 in the degradation of misfolded chaperone substrates: ATXN3 restricting the length of ubiquitin chain attached to STUB1/CHIP substrates and preventing further chain extension. Ubiquitinates NOS1 in concert with Hsp70 and Hsp40. Modulates the activity of several chaperone complexes, including Hsp70, Hsc70 and Hsp90. Ubiquitinates CHRNA3 targeting it for endoplasmic reticulum-associated degradation in cortical neurons, as part of the STUB1-VCP-UBXN2A complex. Ubiquitinates and promotes ESR1 proteasomal degradation in response to age-related circulating estradiol (17-beta-estradiol/E2) decline, thereby promotes neuronal apoptosis in response to ischemic reperfusion injury. Mediates transfer of non-canonical short ubiquitin chains to HSPA8 that have no effect on HSPA8 degradation. Mediates polyubiquitination of DNA polymerase beta (POLB) at 'Lys-41', 'Lys-61' and 'Lys-81', thereby playing a role in base-excision repair: catalyzes polyubiquitination by amplifying the HUWE1/ARF-BP1-dependent monoubiquitination and leading to POLB-degradation by the proteasome. Mediates polyubiquitination of CYP3A4. Ubiquitinates EPHA2 and may regulate the receptor stability and activity through proteasomal degradation. Acts as a co-chaperone for HSPA1A and HSPA1B chaperone proteins and promotes ubiquitin-mediated protein degradation. Negatively regulates the suppressive function of regulatory T-cells (Treg) during inflammation by mediating the ubiquitination and degradation of FOXP3 in a HSPA1A/B-dependent manner. Catalyzes monoubiquitination of SIRT6, preventing its degradation by the proteasome. Likely mediates polyubiquitination and down-regulates plasma membrane expression of PD-L1/CD274, an immune inhibitory ligand critical for immune tolerance to self and antitumor immunity. Negatively regulates TGF-beta signaling by modulating the basal level of SMAD3 via ubiquitin-mediated degradation. Plays a role in the degradation of TP53. Mediates ubiquitination of RIPK3 leading to its subsequent proteasome-dependent degradation. May regulate myosin assembly in striated muscles together with UBE4B and VCP/p97 by targeting myosin chaperone UNC45B for proteasomal degradation. Ubiquitinates PPARG in macrophages playing a role in M2 macrophages polarization and angiogenesis. The polypeptide is E3 ubiquitin-protein ligase CHIP (Rattus norvegicus (Rat)).